A 460-amino-acid chain; its full sequence is GTPase Der (460 aa).

EngA-type G domains are found at residues 2–164 (KKVI…DDEI) and 199–370 (IKVG…ANFT). Residues 8–15 (GRPNVGKS), 55–59 (DSGGL), 116–119 (NKID), 205–212 (GRVNVGKS), 252–256 (DTAGI), and 316–319 (NKWD) contribute to the GTP site. In terms of domain architecture, KH-like spans 371-454 (QKIATSKLND…PVILLPRKRG (84 aa)).

The protein belongs to the TRAFAC class TrmE-Era-EngA-EngB-Septin-like GTPase superfamily. EngA (Der) GTPase family. Associates with the 50S ribosomal subunit.

Functionally, GTPase that plays an essential role in the late steps of ribosome biogenesis. The chain is GTPase Der from Campylobacter hominis (strain ATCC BAA-381 / DSM 21671 / CCUG 45161 / LMG 19568 / NCTC 13146 / CH001A).